The primary structure comprises 386 residues: Synaptotagmin-5 (386 aa).

Pro residues predominate over residues 1-16 (MFPEPPTLGSPAPKTP). Residues 1–21 (MFPEPPTLGSPAPKTPPDSSR) form a disordered region. Over 1 to 24 (MFPEPPTLGSPAPKTPPDSSRIRQ) the chain is Vesicular. The chain crosses the membrane as a helical span at residues 25–45 (GAVPAWVLATIVLGSGLLVFS). Topologically, residues 46–386 (SCFCLYRKRC…PDRARPIPAP (341 aa)) are cytoplasmic. C2 domains are found at residues 108–227 (QLGR…QAWR) and 239–372 (KLGD…AQWH). Ca(2+) is bound by residues leucine 138, aspartate 139, aspartate 145, aspartate 197, phenylalanine 198, aspartate 199, serine 202, aspartate 205, aspartate 270, aspartate 276, aspartate 330, and aspartate 332.

It belongs to the synaptotagmin family. As to quaternary structure, homodimer. Interacts with both alpha- and beta-tubulin. It depends on Ca(2+) as a cofactor.

The protein localises to the cytoplasmic vesicle. It is found in the secretory vesicle. It localises to the synaptic vesicle membrane. The protein resides in the recycling endosome membrane. In terms of biological role, may be involved in Ca(2+)-dependent exocytosis of secretory vesicles through Ca(2+) and phospholipid binding to the C2 domain or may serve as Ca(2+) sensors in the process of vesicular trafficking and exocytosis. Regulates the Ca(2+)-dependent secretion of norepinephrine in PC12 cells. Required for export from the endocytic recycling compartment to the cell surface. The protein is Synaptotagmin-5 (Syt5) of Mus musculus (Mouse).